The sequence spans 558 residues: T-complex protein 1 subunit gamma (558 aa).

A disulfide bond links cysteine 381 and cysteine 387.

Belongs to the TCP-1 chaperonin family. As to quaternary structure, heterooligomeric complex of about 850 to 900 kDa that forms two stacked rings, 12 to 16 nm in diameter.

It localises to the cytoplasm. In terms of biological role, molecular chaperone; assists the folding of proteins upon ATP hydrolysis. Known to play a role, in vitro, in the folding of actin and tubulin. The polypeptide is T-complex protein 1 subunit gamma (Thalassiosira weissflogii (Marine diatom)).